A 256-amino-acid chain; its full sequence is Ribonuclease 3 (256 aa).

The RNase III domain occupies 3–125; the sequence is LEALQQRLGY…IFGAVFLDGG (123 aa). A Mg(2+)-binding site is contributed by Glu-38. Asp-42 is a catalytic residue. 2 residues coordinate Mg(2+): Asp-111 and Glu-114. Glu-114 is an active-site residue. One can recognise a DRBM domain in the interval 152–222; it reads DAKTLLQEYL…AKLALEEAHR (71 aa). The segment at 227–256 is disordered; that stretch reads LVKRSRAERTGKTRKQATPPDPQLSLRLKE.

The protein belongs to the ribonuclease III family. In terms of assembly, homodimer. Mg(2+) serves as cofactor.

Its subcellular location is the cytoplasm. It carries out the reaction Endonucleolytic cleavage to 5'-phosphomonoester.. In terms of biological role, digests double-stranded RNA. Involved in the processing of primary rRNA transcript to yield the immediate precursors to the large and small rRNAs (23S and 16S). Processes some mRNAs, and tRNAs when they are encoded in the rRNA operon. Processes pre-crRNA and tracrRNA of type II CRISPR loci if present in the organism. The chain is Ribonuclease 3 from Ralstonia nicotianae (strain ATCC BAA-1114 / GMI1000) (Ralstonia solanacearum).